The sequence spans 75 residues: CLAVATA3/ESR (CLE)-related protein 33 (75 aa).

The signal sequence occupies residues 1-22 (MASWRMLCFVLLFTSILICHDA). Pro-67 and Pro-70 each carry hydroxyproline. Residue Pro-70 is glycosylated (O-linked (Ara...) hydroxyproline).

It belongs to the CLV3/ESR signal peptide family. Post-translationally, the O-glycosylation (arabinosylation) of the hydroxyproline Pro-70 enhances binding affinity of the CLE33p peptide for its receptor. Expressed in root vasculature.

It is found in the secreted. The protein resides in the extracellular space. Its function is as follows. Signaling peptide involved in the regulation of root colonization by arbuscular mycorrhizal (AM) fungi. Moves from root to shoot to function with the receptor kinase SUNN, in a signaling pathway that repress strigolactone biosynthetic genes and strigolactone content in the roots, and consequently reduces the promotion of further colonization by AM fungi. In Medicago truncatula (Barrel medic), this protein is CLAVATA3/ESR (CLE)-related protein 33.